A 250-amino-acid polypeptide reads, in one-letter code: 5'-nucleotidase SurE (250 aa).

A divalent metal cation is bound by residues Asp-8, Asp-9, Ser-40, and Asn-95.

The protein belongs to the SurE nucleotidase family. A divalent metal cation serves as cofactor.

Its subcellular location is the cytoplasm. It catalyses the reaction a ribonucleoside 5'-phosphate + H2O = a ribonucleoside + phosphate. In terms of biological role, nucleotidase that shows phosphatase activity on nucleoside 5'-monophosphates. The polypeptide is 5'-nucleotidase SurE (Nitratidesulfovibrio vulgaris (strain DP4) (Desulfovibrio vulgaris)).